Here is a 199-residue protein sequence, read N- to C-terminus: Elongation factor Ts (199 aa).

The interval 80 to 83 (TDFV) is involved in Mg(2+) ion dislocation from EF-Tu.

Belongs to the EF-Ts family.

It localises to the cytoplasm. In terms of biological role, associates with the EF-Tu.GDP complex and induces the exchange of GDP to GTP. It remains bound to the aminoacyl-tRNA.EF-Tu.GTP complex up to the GTP hydrolysis stage on the ribosome. This chain is Elongation factor Ts, found in Thermodesulfovibrio yellowstonii (strain ATCC 51303 / DSM 11347 / YP87).